The sequence spans 638 residues: Chaperone protein DnaK (638 aa).

Threonine 198 is modified (phosphothreonine; by autocatalysis). Positions 599 to 638 (IYESQQAEGGAEGGPSGHHDDGIVDADYEEVKDDNTKKSA) are disordered. Residues 621–630 (IVDADYEEVK) show a composition bias toward acidic residues.

Belongs to the heat shock protein 70 family.

In terms of biological role, acts as a chaperone. This Allorhizobium ampelinum (strain ATCC BAA-846 / DSM 112012 / S4) (Agrobacterium vitis (strain S4)) protein is Chaperone protein DnaK.